The primary structure comprises 365 residues: Chorismate synthase (365 aa).

Positions 41–51 (IQKELDRRRPG) are enriched in basic and acidic residues. The tract at residues 41 to 62 (IQKELDRRRPGQSEVSTPRSEA) is disordered. Residue Arg48 participates in NADP(+) binding. FMN contacts are provided by residues 125-127 (RSS), Gly285, 300-304 (KPTPS), and Arg327.

It belongs to the chorismate synthase family. FMNH2 is required as a cofactor.

The enzyme catalyses 5-O-(1-carboxyvinyl)-3-phosphoshikimate = chorismate + phosphate. It functions in the pathway metabolic intermediate biosynthesis; chorismate biosynthesis; chorismate from D-erythrose 4-phosphate and phosphoenolpyruvate: step 7/7. In terms of biological role, catalyzes the anti-1,4-elimination of the C-3 phosphate and the C-6 proR hydrogen from 5-enolpyruvylshikimate-3-phosphate (EPSP) to yield chorismate, which is the branch point compound that serves as the starting substrate for the three terminal pathways of aromatic amino acid biosynthesis. This reaction introduces a second double bond into the aromatic ring system. The sequence is that of Chorismate synthase from Methanosarcina acetivorans (strain ATCC 35395 / DSM 2834 / JCM 12185 / C2A).